Consider the following 532-residue polypeptide: Cytochrome P450 monooxygenase pgmC (532 aa).

A helical membrane pass occupies residues 15–32; that stretch reads ISTLAVLIGFIALLTAWL. Cysteine 438 provides a ligand contact to heme.

It belongs to the cytochrome P450 family. It depends on heme as a cofactor.

The protein localises to the membrane. The protein operates within pigment biosynthesis. Its pathway is secondary metabolite biosynthesis. Cytochrome P450 monooxygenase; part of the gene cluster that mediates the biosynthesis of pleosporalin A, ascomycone A, as well as a third cryptic naphthoquinone derived pigment, all responsible for the coloration of conidia. Involved in the oxidation of fusarubinaldehyde at C-9. PgmC has low substrate-specificity and is also able to use the pgmA product 3-acetonyl-1,6,8-trihydroxy-2-naphthaldehyde as a substrate. The pathway begins with the biosynthesis of the cyclized heptaketide 3-acetonyl-1,6,8-trihydroxy-2-naphthaldehyde by the NR-PKS pgmA. The C-6 hydroxyl group is further methylated by the O-methyltransferase pgmB to yield fusarubinaldehyde which is in turn oxidized by the cytochrome P450 monooxygenase pgmC at C-9. The C-1 hydroxyl group is then methylated spontaneously. Although pgmE, pgmD and pgmH are essential for the production of pleosporalin A, it is not the case for the 2 other final products and it remains difficult to assign a specific function to each enzyme. PgmF and pgmG seem not to be involved in pigment biosynthesis although they were regulated by the cluster-specific transcription factor pgmR. This chain is Cytochrome P450 monooxygenase pgmC, found in Aspergillus terreus (strain NIH 2624 / FGSC A1156).